The primary structure comprises 405 residues: POC1 centriolar protein homolog A (405 aa).

7 WD repeats span residues 17-56 (GHRD…RAYR), 59-98 (GHKD…ESTV), 101-140 (AHTA…FLFS), 143-182 (QHIN…CIHS), 185-224 (EHGG…LLQH), 227-266 (LHSA…LLYT), and 269-308 (GHQG…VDYG). The tract at residues 313–352 (RRPPPLTSSSGTLPKMDLPVPPGRDRSLESVQGEPQESIS) is disordered. A compositionally biased stretch (polar residues) spans 341–352 (ESVQGEPQESIS). Positions 367-395 (QLDILTQTVSILEQRLTLTEDRLKQCLEN) form a coiled coil.

This sequence belongs to the WD repeat POC1 family. In terms of assembly, interacts with POC1B. In terms of tissue distribution, widely expressed in embryonic and adult tissues.

It localises to the cytoplasm. It is found in the cytoskeleton. The protein localises to the microtubule organizing center. Its subcellular location is the centrosome. The protein resides in the centriole. It localises to the cilium basal body. It is found in the spindle pole. In terms of biological role, plays an important role in centriole assembly and/or stability and ciliogenesis. Involved in early steps of centriole duplication, as well as in the later steps of centriole length control. Acts in concert with POC1B to ensure centriole integrity and proper mitotic spindle formation. This is POC1 centriolar protein homolog A (Poc1a) from Mus musculus (Mouse).